The primary structure comprises 714 residues: Polyribonucleotide nucleotidyltransferase (714 aa).

Mg(2+) contacts are provided by D489 and D495. Residues P556–I615 form the KH domain. An S1 motif domain is found at G625 to K693. Residues S691–D714 are disordered. Residues P700–D714 are compositionally biased toward basic and acidic residues.

This sequence belongs to the polyribonucleotide nucleotidyltransferase family. The cofactor is Mg(2+).

Its subcellular location is the cytoplasm. The enzyme catalyses RNA(n+1) + phosphate = RNA(n) + a ribonucleoside 5'-diphosphate. Functionally, involved in mRNA degradation. Catalyzes the phosphorolysis of single-stranded polyribonucleotides processively in the 3'- to 5'-direction. This is Polyribonucleotide nucleotidyltransferase from Streptococcus equi subsp. zooepidemicus (strain MGCS10565).